A 153-amino-acid chain; its full sequence is CASP-like protein 5B1 (153 aa).

Topologically, residues 1–20 (MRELAGSPGTWSGLSLRVGQ) are cytoplasmic. A helical transmembrane segment spans residues 21–41 (LVFAAASVCATASALGFAAYT). A42 is a topological domain (extracellular). A helical membrane pass occupies residues 43-63 (FCYLIASMGLQALWSLGLACL). The Cytoplasmic segment spans residues 64-76 (DCYALKFKKDLHS). The chain crosses the membrane as a helical span at residues 77-97 (AVLLSLFVVGDWVTAILSFAA). The Extracellular portion of the chain corresponds to 98 to 128 (SCSAAGVVVLFDRDIYACRNPQLPCGRFELA). Residues 129-149 (IACAFLSWAFSATSALVMFWL) traverse the membrane as a helical segment. Residues 150 to 153 (LASL) lie on the Cytoplasmic side of the membrane.

It belongs to the Casparian strip membrane proteins (CASP) family. As to quaternary structure, homodimer and heterodimers.

It is found in the cell membrane. The protein is CASP-like protein 5B1 of Oryza sativa subsp. indica (Rice).